The sequence spans 375 residues: Nucleolysin TIAR (375 aa).

RRM domains follow at residues R9–T85 and F97–R175. An N6-acetyllysine modification is found at K122. S201 carries the post-translational modification Phosphoserine. In terms of domain architecture, RRM 3 spans C205–E277. Residues F345 to Q375 are disordered. Residues G352–N363 are compositionally biased toward pro residues.

As to quaternary structure, interacts with FASTK. In terms of processing, phosphorylated by MAPK14 following DNA damage, releasing TIAR from GADD45A mRNA. Expressed in brain, heart, kidney, lung and skeletal muscle.

It is found in the nucleus. The protein localises to the cytoplasm. The protein resides in the cytolytic granule. It localises to the stress granule. Its function is as follows. RNA-binding protein involved in alternative pre-RNA splicing and in cytoplasmic stress granules formation. Shows a preference for uridine-rich RNAs. Activates splicing of alternative exons with weak 5' splice sites followed by a U-rich stretch on its own pre-mRNA and on TIA1 mRNA. Promotes the inclusion of TIA1 exon 5 to give rise to the long isoform (isoform a) of TIA1. Acts downstream of the stress-induced phosphorylation of EIF2S1/EIF2A to promote the recruitment of untranslated mRNAs to cytoplasmic stress granules (SG). Possesses nucleolytic activity against cytotoxic lymphocyte target cells. May be involved in apoptosis. In Homo sapiens (Human), this protein is Nucleolysin TIAR (TIAL1).